Here is a 342-residue protein sequence, read N- to C-terminus: Foldase protein PrsA (342 aa).

The signal sequence occupies residues 1 to 22; sequence MVSVKKIVASALVGVLMFSAVG. Cysteine 23 carries the N-palmitoyl cysteine lipid modification. The S-diacylglycerol cysteine moiety is linked to residue cysteine 23. Residues 190-284 enclose the PpiC domain; that stretch reads AKGVLARHLL…FGYHIIQAGA (95 aa).

Belongs to the PrsA family.

Its subcellular location is the cell membrane. The enzyme catalyses [protein]-peptidylproline (omega=180) = [protein]-peptidylproline (omega=0). In terms of biological role, plays a major role in protein secretion by helping the post-translocational extracellular folding of several secreted proteins. The polypeptide is Foldase protein PrsA (Clostridium perfringens (strain SM101 / Type A)).